The sequence spans 152 residues: Glutamyl-tRNA(Gln) amidotransferase subunit F, mitochondrial (152 aa).

Belongs to the GatF family. As to quaternary structure, subunit of the heterotrimeric GatFAB amidotransferase (AdT) complex, composed of A, B and F subunits.

It localises to the mitochondrion inner membrane. It catalyses the reaction L-glutamyl-tRNA(Gln) + L-glutamine + ATP + H2O = L-glutaminyl-tRNA(Gln) + L-glutamate + ADP + phosphate + H(+). Allows the formation of correctly charged Gln-tRNA(Gln) through the transamidation of misacylated Glu-tRNA(Gln) in the mitochondria. The reaction takes place in the presence of glutamine and ATP through an activated gamma-phospho-Glu-tRNA(Gln). Required for proper protein synthesis within the mitochondrion. This Komagataella phaffii (strain GS115 / ATCC 20864) (Yeast) protein is Glutamyl-tRNA(Gln) amidotransferase subunit F, mitochondrial.